We begin with the raw amino-acid sequence, 250 residues long: MSTSMREMLEAGVHFGHQTRFWNPKMAPYIFGHRNRIHIINLEKSLPMFQDAMKFAKQLSANRGTILMVGTKRQAREIVATEAKRAGVPYVDQRWLGGMLTNFKTVKTSIKRLKEMKAQQEAGLDSISKKEQLTFKREIEKLEKDIGGIQDMNALPDAIFVIDVGFHKIAILEAKKLGIPLIGVVDSNHSPIGIDYVIPGNDDSSKAVALYARGIADAILEGRANAVNDVVKAVSAESSDEFVEVENAAN.

Belongs to the universal ribosomal protein uS2 family.

The chain is Small ribosomal subunit protein uS2 from Polaromonas sp. (strain JS666 / ATCC BAA-500).